Reading from the N-terminus, the 277-residue chain is Large ribosomal subunit protein uL2c (277 aa).

The span at 1-11 shows a compositional bias: polar residues; it reads MNTRSYSTFTP. 2 disordered regions span residues 1–47 and 254–277; these read MNTR…RNNS and YSALGKKSRKRNKYSDVSILRRRK.

The protein belongs to the universal ribosomal protein uL2 family. Part of the 50S ribosomal subunit.

It localises to the plastid. The protein localises to the chloroplast. In Cryptomeria japonica (Japanese cedar), this protein is Large ribosomal subunit protein uL2c (rpl2).